A 1390-amino-acid chain; its full sequence is DNA-directed RNA polymerase subunit beta (1390 aa).

The interval 556–576 (KLADQDAENDPDSDLGTKSSN) is disordered.

It belongs to the RNA polymerase beta chain family. The RNAP catalytic core consists of 2 alpha, 1 beta, 1 beta' and 1 omega subunit. When a sigma factor is associated with the core the holoenzyme is formed, which can initiate transcription.

The enzyme catalyses RNA(n) + a ribonucleoside 5'-triphosphate = RNA(n+1) + diphosphate. Functionally, DNA-dependent RNA polymerase catalyzes the transcription of DNA into RNA using the four ribonucleoside triphosphates as substrates. This chain is DNA-directed RNA polymerase subunit beta, found in Mycoplasmoides gallisepticum (strain R(low / passage 15 / clone 2)) (Mycoplasma gallisepticum).